The sequence spans 192 residues: Ion-translocating oxidoreductase complex subunit B (192 aa).

The hydrophobic stretch occupies residues 1–26 (MNAFWIAVAAVSLLGLAFGAILGYAS). Positions 32–91 (EDDPVVEKIDEILPQSQCGQCGYPGCRPYAEAISCNGEKINRCAPGGEAVMLKIAELLNV) constitute a 4Fe-4S domain. [4Fe-4S] cluster is bound by residues Cys-49, Cys-52, Cys-57, Cys-74, Cys-117, Cys-120, Cys-123, Cys-127, Cys-147, Cys-150, Cys-153, and Cys-157. 2 consecutive 4Fe-4S ferredoxin-type domains span residues 108–137 (MVAVIDENNCIGCTKCIQACPVDAIVGATR) and 138–167 (AMHTVMSDLCTGCNLCVDPCPTHCISLQPV).

Belongs to the 4Fe4S bacterial-type ferredoxin family. RnfB subfamily. The complex is composed of six subunits: RsxA, RsxB, RsxC, RsxD, RsxE and RsxG. The cofactor is [4Fe-4S] cluster.

Its subcellular location is the cell inner membrane. In terms of biological role, part of a membrane-bound complex that couples electron transfer with translocation of ions across the membrane. Required to maintain the reduced state of SoxR. The chain is Ion-translocating oxidoreductase complex subunit B from Escherichia coli O6:H1 (strain CFT073 / ATCC 700928 / UPEC).